The chain runs to 583 residues: Eukaryotic translation initiation factor 3 subunit D (583 aa).

The segment at 116–150 is disordered; the sequence is GRAQRGAGQRGGRAGFQRVGAGRGQGDRFYDNRGG. Positions 140–149 are enriched in basic and acidic residues; it reads QGDRFYDNRG. The segment at 298 to 312 is RNA gate; it reads SLDLVTVNENAIDAP. Residues 561 to 583 form a disordered region; the sequence is NTFEEDEEAAAEEEEQKAEEDEE. Positions 563-583 are enriched in acidic residues; that stretch reads FEEDEEAAAEEEEQKAEEDEE.

The protein belongs to the eIF-3 subunit D family. Component of the eukaryotic translation initiation factor 3 (eIF-3) complex.

The protein resides in the cytoplasm. Its function is as follows. mRNA cap-binding component of the eukaryotic translation initiation factor 3 (eIF-3) complex, which is involved in protein synthesis of a specialized repertoire of mRNAs and, together with other initiation factors, stimulates binding of mRNA and methionyl-tRNAi to the 40S ribosome. The eIF-3 complex specifically targets and initiates translation of a subset of mRNAs involved in cell proliferation. In the eIF-3 complex, eif3d specifically recognizes and binds the 7-methylguanosine cap of a subset of mRNAs. This chain is Eukaryotic translation initiation factor 3 subunit D, found in Aspergillus oryzae (strain ATCC 42149 / RIB 40) (Yellow koji mold).